A 229-amino-acid chain; its full sequence is MMSYAEKPEDITRDEWMEKLNNVHIQRADMNRLIMNYLVTEGFKEAAEKFRMESGIEPSVDLDSLDERIKIREMVLKGQIQEAIALINSLHPELLDTNRYLYFHLQQQHLIELIRLRETEAALEFAQTQLAEQGEESRECLTEMERTLALLAFDNPEESPFGDLLNMMQRQKVWSEVNQAVLDYENRESTPKLAKLLKLLLWAQNELDQKKVKYPKMTDLSKGTIEDPK.

Positions 26 to 58 constitute a LisH domain; it reads QRADMNRLIMNYLVTEGFKEAAEKFRMESGIEP. The region spanning 64–121 is the CTLH domain; it reads SLDERIKIREMVLKGQIQEAIALINSLHPELLDTNRYLYFHLQQQHLIELIRLRETEA.

As to quaternary structure, identified in the CTLH complex that contains at least MAEA, RMND5A (or alternatively its paralog RMND5B), GID8, WDR26, and RANBP9 and/or RANBP10. Interacts with CTNNB1.

The protein resides in the cytoplasm. Its subcellular location is the nucleus. Functionally, core component of the CTLH E3 ubiquitin-protein ligase complex that selectively accepts ubiquitin from UBE2H and mediates ubiquitination and subsequent proteasomal degradation of target proteins. Acts as a positive regulator of Wnt signaling pathway by promoting beta-catenin (CTNNB1) nuclear accumulation. Required for normal Wnt signaling and normal dorsoventral patterning during embryogenesis. The protein is Glucose-induced degradation protein 8-B homolog (gid8b) of Danio rerio (Zebrafish).